A 230-amino-acid polypeptide reads, in one-letter code: Esterase OVCA2 (230 aa).

Active-site charge relay system residues include Ser124, Asp182, and His209.

This sequence belongs to the LovG family.

The enzyme catalyses a carboxylic ester + H2O = an alcohol + a carboxylate + H(+). In terms of biological role, exhibits ester hydrolase activity with a strong preference for long-chain alkyl ester substrates and high selectivity against a variety of short, branched, and substituted esters. Is able to hydrolyze ester bonds within a wide range of p-nitrophenyl derivatives (C2-C14) in vitro, with a strong preference toward substrates of &gt;8 carbons. This Xenopus tropicalis (Western clawed frog) protein is Esterase OVCA2 (ovca2).